We begin with the raw amino-acid sequence, 221 residues long: Ras-related protein Rab-27A (221 aa).

Ser2 is subject to N-acetylserine. At Ser2 the chain carries Phosphoserine. 16–24 (GDSGVGKTS) contributes to the GTP binding site. An Effector region motif is present at residues 38 to 46 (FITTVGIDF). Residues 74–78 (DTAGQ), 133–136 (NKSD), and 163–165 (SAA) each bind GTP. Cys123 and Cys188 form a disulfide bridge. S-geranylgeranyl cysteine attachment occurs at residues Cys219 and Cys221. Cys221 bears the Cysteine methyl ester mark.

This sequence belongs to the small GTPase superfamily. Rab family. Binds SYTL1, SLAC2B, MYRIP, SYTL3, SYTL4 and SYTL5. Interacts with RPH3A and RPH3A. Binds MLPH and SYTL2. Interacts with UNC13D. Does not interact with the BLOC-3 complex (heterodimer of HPS1 and HPS4). Interacts (GDP-bound form preferentially) with DENND10. High levels in eye, intestine, lung, pancreas and spleen, and low or absent in brain, liver, heart, kidney, and skeletal muscle.

The protein localises to the membrane. The protein resides in the melanosome. It localises to the late endosome. It is found in the lysosome. It catalyses the reaction GTP + H2O = GDP + phosphate + H(+). Regulated by guanine nucleotide exchange factors (GEFs) which promote the exchange of bound GDP for free GTP, GTPase activating proteins (GAPs) which increase the GTP hydrolysis activity, and GDP dissociation inhibitors which inhibit the dissociation of the nucleotide from the GTPase. Activated by GEFs such as DENND10. Functionally, small GTPase which cycles between active GTP-bound and inactive GDP-bound states. In its active state, binds to a variety of effector proteins to regulate homeostasis of late endocytic pathway, including endosomal positioning, maturation and secretion. Plays a role in cytotoxic granule exocytosis in lymphocytes. Required for both granule maturation and granule docking and priming at the immunologic synapse. The sequence is that of Ras-related protein Rab-27A (Rab27a) from Rattus norvegicus (Rat).